The primary structure comprises 589 residues: Transmembrane 9 superfamily member 1 (589 aa).

The signal sequence occupies residues 1 to 24 (MPSSSSAAVLVFLLLVSLLTPTFA). The Lumenal portion of the chain corresponds to 25–222 (SDSDHKYQAE…YPFFEHQIHW (198 aa)). Residues 223–243 (FSIFNSFMMVIFLTGLVSMIL) traverse the membrane as a helical segment. Residues 244-293 (MRTLRNDYAKYAREDDDLESLERDVSEESGWKLVHGDVFRPASSLVLLSA) are Cytoplasmic-facing. A helical membrane pass occupies residues 294-314 (VVGTGAQLALLVLLVILMAIV). Over 315–321 (GTLYVGR) the chain is Lumenal. Residues 322–342 (GAIVTTFIVCYALTSFVSGYV) traverse the membrane as a helical segment. The Cytoplasmic segment spans residues 343–364 (SGGMYSRSGGKHWIKCMVLTAS). The helical transmembrane segment at 365-385 (LFPFLCFGIGFLLNTIAIFYG) threads the bilayer. Residues 386-395 (SLAAIPFGTM) lie on the Lumenal side of the membrane. The helical transmembrane segment at 396–416 (VVVFVIWGFISFPLALLGTVV) threads the bilayer. The Cytoplasmic segment spans residues 417-448 (GRNWSGAPNNPCRVKTIPRPIPEKKWYLTPSV). A helical transmembrane segment spans residues 449 to 469 (VSLMGGLLPFGSIFIEMYFVF). Residues 470-481 (TSFWNYKVYYVY) are Lumenal-facing. A helical membrane pass occupies residues 482–502 (GFMLLVFVILVIVTVCVTIVG). Residues 503 to 518 (TYFLLNAENYHWQWTS) lie on the Cytoplasmic side of the membrane. The helical transmembrane segment at 519–539 (FFSAASTAVYVYLYSIYYYYV) threads the bilayer. The Lumenal segment spans residues 540-550 (KTKMSGFFQTS). The helical transmembrane segment at 551–571 (FYFGYTMMFCLGLGILCGAVG) threads the bilayer. The Cytoplasmic segment spans residues 572–589 (YLGSNLFVRRIYRNIKCD). The short motif at 578–583 (FVRRIY) is the Endoplasmic reticulum export signal element. The Golgi retention signal motif lies at 587–589 (KCD).

It belongs to the nonaspanin (TM9SF) (TC 9.A.2) family. In terms of tissue distribution, ubiquitous.

It localises to the endosome membrane. The protein resides in the golgi apparatus membrane. This chain is Transmembrane 9 superfamily member 1, found in Arabidopsis thaliana (Mouse-ear cress).